Reading from the N-terminus, the 716-residue chain is Dynein axonemal intermediate chain 7 (716 aa).

It belongs to the DNAI7 family. Part of the multisubunit axonemal dynein complex formed at least of two heavy chains and a number of intermediate and light chains. Interacts with tubulin. Associates with microtubule. Ubiquitinated. Ubiquitination leads to its degradation through the 26S proteasome. Ubiquitin-proteasome-mediated DNAI7 degradation occurs in mitosis.

It localises to the cell projection. The protein localises to the cilium. It is found in the cytoplasm. In terms of biological role, via its association with the multisubunit axonemal dynein complex, is potentially involved in the regulation of cilia function. May also act as a cell cycle regulator. This chain is Dynein axonemal intermediate chain 7, found in Homo sapiens (Human).